A 336-amino-acid chain; its full sequence is Fimbrial adhesin PapGII (336 aa).

The signal sequence occupies residues 1–20 (MKKWFPALLFSLCVSGESSA). Intrachain disulfides connect cysteine 64–cysteine 138 and cysteine 217–cysteine 249. Residues glutamate 79 and 124 to 127 (GYKW) each bind D-galactose.

Belongs to the adhesin PapG family.

It localises to the secreted. The protein localises to the fimbrium. Its function is as follows. Tip adhesin component of type P pili that plays a critical role in kidney infection through targeted interaction with the globoseries glycolipids containing the Gal-alpha(1-4)-Gal disaccharide present on uroepithelial cells. In turn, transcriptionally regulates host gene expression in kidney cells, leading to inflammatory pathway activation and renal tissue damage. Acts thereby as key determinant of invasive uropathogenic E.coli (UPEC), which cause pyelonephritis and urinary-source bacteremia. The sequence is that of Fimbrial adhesin PapGII from Escherichia coli O6:H1 (strain CFT073 / ATCC 700928 / UPEC).